A 191-amino-acid chain; its full sequence is Repressor Rok (191 aa).

The stretch at 2–43 (FNEREALRLRLEQLNEAEVKVIREYQIERDKIYAKLRELDRN) forms a coiled coil. The span at 75 to 96 (SYQPQSQQQSVQPQLQSISSLP) shows a compositional bias: low complexity. Positions 75 to 116 (SYQPQSQQQSVQPQLQSISSLPAGIPDGTTRRRRGTARPGSK) are disordered. The DNA-binding stretch occupies residues 95–191 (LPAGIPDGTT…EIESAESANE (97 aa)).

It localises to the cytoplasm. The protein resides in the nucleoid. Repressor of comK, the master regulator of competence development. Overexpression seems to be lethal. Represses at least 20 genes that specify membrane-localized and secreted proteins, including some that encode products with antibiotic activity. Binds to many AT-rich sites in the chromosome, many of which are known or thought to derive from horizontal gene transfer; helps keep mobile element ICEBs1 quiescent in the genome. Binds to its own promoter and is thus probably autoregulatory. This Bacillus subtilis (strain 168) protein is Repressor Rok.